The following is a 128-amino-acid chain: Cytochrome c-type biogenesis protein CcmE (128 aa).

The Cytoplasmic portion of the chain corresponds to 1–8 (MQKRVRNR). Residues 9 to 29 (LITIIICFCSAFLGIGIILYN) traverse the membrane as a helical; Signal-anchor for type II membrane protein segment. The Periplasmic portion of the chain corresponds to 30–128 (LENNIVFFLP…KHDENYRPTR (99 aa)). Heme contacts are provided by histidine 120 and tyrosine 124.

It belongs to the CcmE/CycJ family.

It is found in the cell inner membrane. Functionally, heme chaperone required for the biogenesis of c-type cytochromes. Transiently binds heme delivered by CcmC and transfers the heme to apo-cytochromes in a process facilitated by CcmF and CcmH. This is Cytochrome c-type biogenesis protein CcmE from Rickettsia canadensis (strain McKiel).